We begin with the raw amino-acid sequence, 393 residues long: Formate-dependent phosphoribosylglycinamide formyltransferase (393 aa).

Residues 22–23 (EL) and E82 each bind N(1)-(5-phospho-beta-D-ribosyl)glycinamide. ATP contacts are provided by residues R114, K155, 160–165 (SSGHGQ), 195–198 (EGFV), and E203. Residues 119–308 (RLAAEKLKLP…EFALHARAIL (190 aa)) form the ATP-grasp domain. E267 and E279 together coordinate Mg(2+). N(1)-(5-phospho-beta-D-ribosyl)glycinamide contacts are provided by residues D286, K356, and 363-364 (RR).

Belongs to the PurK/PurT family. As to quaternary structure, homodimer.

The enzyme catalyses N(1)-(5-phospho-beta-D-ribosyl)glycinamide + formate + ATP = N(2)-formyl-N(1)-(5-phospho-beta-D-ribosyl)glycinamide + ADP + phosphate + H(+). Its pathway is purine metabolism; IMP biosynthesis via de novo pathway; N(2)-formyl-N(1)-(5-phospho-D-ribosyl)glycinamide from N(1)-(5-phospho-D-ribosyl)glycinamide (formate route): step 1/1. In terms of biological role, involved in the de novo purine biosynthesis. Catalyzes the transfer of formate to 5-phospho-ribosyl-glycinamide (GAR), producing 5-phospho-ribosyl-N-formylglycinamide (FGAR). Formate is provided by PurU via hydrolysis of 10-formyl-tetrahydrofolate. In Histophilus somni (strain 129Pt) (Haemophilus somnus), this protein is Formate-dependent phosphoribosylglycinamide formyltransferase.